The chain runs to 180 residues: tRNA (cytidine(56)-2'-O)-methyltransferase (180 aa).

Residues Leu-84 and 112–116 (GAEKV) each bind S-adenosyl-L-methionine.

Belongs to the aTrm56 family. As to quaternary structure, homodimer.

The protein localises to the cytoplasm. It catalyses the reaction cytidine(56) in tRNA + S-adenosyl-L-methionine = 2'-O-methylcytidine(56) in tRNA + S-adenosyl-L-homocysteine + H(+). In terms of biological role, specifically catalyzes the AdoMet-dependent 2'-O-ribose methylation of cytidine at position 56 in tRNAs. In Natronomonas pharaonis (strain ATCC 35678 / DSM 2160 / CIP 103997 / JCM 8858 / NBRC 14720 / NCIMB 2260 / Gabara) (Halobacterium pharaonis), this protein is tRNA (cytidine(56)-2'-O)-methyltransferase.